Reading from the N-terminus, the 560-residue chain is Interferon alpha/beta receptor 1 (560 aa).

Residues 1–24 (MLSLLGATTLMLVAGRWVLPAASG) form the signal peptide. The Extracellular segment spans residues 25-437 (EANLKSENVE…EKTKPGNTSK (413 aa)). Residues asparagine 47 and asparagine 55 are each glycosylated (N-linked (GlcNAc...) asparagine). Cysteine 76 and cysteine 84 are joined by a disulfide. N-linked (GlcNAc...) asparagine glycosylation is found at asparagine 85, asparagine 108, asparagine 109, and asparagine 172. Fibronectin type-III domains are found at residues 126–226 (QIGP…TTER), 231–329 (SPEN…TEVK), and 333–433 (FPPV…TKPG). Cysteine 199 and cysteine 220 form a disulfide bridge. Asparagine 222, asparagine 285, asparagine 313, asparagine 359, and asparagine 377 each carry an N-linked (GlcNAc...) asparagine glycan. Residues cysteine 283 and cysteine 291 are joined by a disulfide bond. Cysteine 404 and cysteine 427 are disulfide-bonded. Residue asparagine 434 is glycosylated (N-linked (GlcNAc...) asparagine). Residues 438–458 (TWLIAGICTALFSILVVIYVV) form a helical membrane-spanning segment. The Cytoplasmic portion of the chain corresponds to 459-560 (RVFLRCVKYV…SEEFLQQDSV (102 aa)). Cysteine 464 is lipidated: S-palmitoyl cysteine. Residues tyrosine 467 and tyrosine 482 each carry the phosphotyrosine; by TYK2 modification. Residues 492-501 (LLSTSEEQTE) form an important for interaction with TYK2 region. Serine 496 and serine 536 each carry phosphoserine. The interval 524-560 (VHEEYNSQASQDSGNYSNEDENSGSKISEEFLQQDSV) is disordered. Positions 529–540 (NSQASQDSGNYS) are enriched in polar residues.

It belongs to the type II cytokine receptor family. In terms of assembly, heterodimer with IFNAR2; forming the receptor for type I interferon. Interacts with TYK2. Interacts with STAT1 and STAT2; the interaction requires its phosphorylation at Tyr-482. Interacts (serine-phosphorylated form) with FBXW11, the substrate recognition component of a SCF (SKP1-CUL1-F-box protein) E3 ubiquitin-protein ligase complex. Interacts with SHMT2; this promotes interaction with ABRAXAS2 and the BRISC complex. Interacts with TRIM10; this interaction prevents association between IFNAR1 and TYK2. In terms of processing, ubiquitinated, leading to its internalization and degradation. Polyubiquitinated via 'Lys-48'-linked and 'Lys-63'-linked ubiquitin chains, leading to receptor internalization and lysosomal degradation. The 'Lys-63'-linked ubiquitin chains are cleaved off by the BRISC complex. Post-translationally, phosphorylated on tyrosine residues in response to interferon-binding: phosphorylation by TYK2 tyrosine kinase creates docking sites for STAT proteins. Phosphorylated on serine residues in response to interferon binding; this promotes interaction with FBXW11 and ubiquitination. Palmitoylation at Cys-464 is required for the activation of STAT1 and STAT2. Expressed in the endometrium. Expressed in all tissues examined except conceptus at day 15 of pregnancy.

Its subcellular location is the cell membrane. It localises to the late endosome. The protein localises to the lysosome. In terms of biological role, together with IFNAR2, forms the heterodimeric receptor for type I interferons (including interferons alpha, beta, epsilon, omega and kappa). Type I interferon binding activates the JAK-STAT signaling cascade, resulting in transcriptional activation or repression of interferon-regulated genes that encode the effectors of the interferon response. Mechanistically, type I interferon-binding brings the IFNAR1 and IFNAR2 subunits into close proximity with one another, driving their associated Janus kinases (JAKs) (TYK2 bound to IFNAR1 and JAK1 bound to IFNAR2) to cross-phosphorylate one another. The activated kinases phosphorylate specific tyrosine residues on the intracellular domains of IFNAR1 and IFNAR2, forming docking sites for the STAT transcription factors. STAT proteins are then phosphorylated by the JAKs, promoting their translocation into the nucleus to regulate expression of interferon-regulated genes. Can also act independently of IFNAR2: form an active IFNB1 receptor by itself and activate a signaling cascade that does not involve activation of the JAK-STAT pathway. The chain is Interferon alpha/beta receptor 1 (IFNAR1) from Ovis aries (Sheep).